Here is a 273-residue protein sequence, read N- to C-terminus: Nucleotide-binding protein TT_C1664 (273 aa).

8 to 15 is an ATP binding site; it reads GLSGAGKT. Residue 57–60 coordinates GTP; it reads DARA.

This sequence belongs to the RapZ-like family.

Displays ATPase and GTPase activities. The protein is Nucleotide-binding protein TT_C1664 of Thermus thermophilus (strain ATCC BAA-163 / DSM 7039 / HB27).